The sequence spans 177 residues: MSRVGKMPIALPSGAEATITAEQITVKGPLGSLSQALNGLVQIENASGTLNFKPANDSREANAMSGTLRALVNNMVNGVTKGFEKKLMLVGVGFRAAAQGDKLNLSLGFSHPVVHAMPAGIKVETPTQTEILIKGIDRQSVGQVAAEVRAYRPPEPYKGKGVRYSDEVVVIKETKKK.

This sequence belongs to the universal ribosomal protein uL6 family. Part of the 50S ribosomal subunit.

This protein binds to the 23S rRNA, and is important in its secondary structure. It is located near the subunit interface in the base of the L7/L12 stalk, and near the tRNA binding site of the peptidyltransferase center. The chain is Large ribosomal subunit protein uL6 from Herminiimonas arsenicoxydans.